The primary structure comprises 130 residues: MCFGVLLSGHYYVMVHLLWKLYYIIGRGLGLLTLLMWKEPEIESPTPKTVTSISWYLLEELCCLFRFIYSIQNRERKCKNGPSPNKRGSASGCSRRGGGRGSGYKTLYRDLCENKPTPELWTLQAPELNL.

Residues 76–102 (RKCKNGPSPNKRGSASGCSRRGGGRGS) are disordered.

This is an uncharacterized protein from Saccharomyces cerevisiae (strain ATCC 204508 / S288c) (Baker's yeast).